The following is a 142-amino-acid chain: Putative pre-16S rRNA nuclease (142 aa).

The protein belongs to the YqgF nuclease family.

It is found in the cytoplasm. Functionally, could be a nuclease involved in processing of the 5'-end of pre-16S rRNA. This chain is Putative pre-16S rRNA nuclease, found in Staphylococcus aureus (strain bovine RF122 / ET3-1).